The sequence spans 463 residues: Heterogeneous nuclear ribonucleoprotein K (463 aa).

M1 bears the N-acetylmethionine mark. The disordered stretch occupies residues 1–37 (METEQPEETFPNTETNGEFGKRPAEDMEEEQAFKRSR). The necessary for interaction with DDX1 stretch occupies residues 1-276 (METEQPEETF…GRGGRPMPPS (276 aa)). A compositionally biased stretch (basic and acidic residues) spans 19 to 37 (FGKRPAEDMEEEQAFKRSR). N6-acetyllysine; alternate is present on K34. A Glycyl lysine isopeptide (Lys-Gly) (interchain with G-Cter in SUMO1); alternate cross-link involves residue K34. K34 is covalently cross-linked (Glycyl lysine isopeptide (Lys-Gly) (interchain with G-Cter in SUMO2); alternate). S36 carries the phosphoserine modification. Residue T39 is modified to Phosphothreonine. The KH 1 domain maps to 42-104 (MVELRILLQS…ETIGEILKKI (63 aa)). Glycyl lysine isopeptide (Lys-Gly) (interchain with G-Cter in SUMO2) cross-links involve residues K52 and K60. 2 repeat units span residues 54–76 (AGAVIGKGGKNIKALRTDYNASV) and 59–62 (GKGG). The 2 X 22 AA approximate repeats stretch occupies residues 54–421 (AGAVIGKGGK…QIRHESGASI (368 aa)). Positions 59 to 407 (GKGGKNIKAL…LAGSIIGKGG (349 aa)) are 5 X 4 AA repeats of G-X-G-G. Phosphoserine occurs at positions 75 and 116. Positions 144–209 (DCELRLLIHQ…DRVVECIKII (66 aa)) constitute a KH 2 domain. A Glycyl lysine isopeptide (Lys-Gly) (interchain with G-Cter in SUMO1); alternate cross-link involves residue K163. K163 participates in a covalent cross-link: Glycyl lysine isopeptide (Lys-Gly) (interchain with G-Cter in SUMO2); alternate. Position 198 is an N6-acetyllysine (K198). An interaction with ZIK1 region spans residues 209 to 337 (ILDLISESPI…RPGDRYDGMV (129 aa)). 2 positions are modified to phosphoserine: S214 and S216. A Glycyl lysine isopeptide (Lys-Gly) (interchain with G-Cter in SUMO2); alternate cross-link involves residue K219. Position 219 is an N6-succinyllysine; alternate (K219). The RNA-binding RGG-box stretch occupies residues 236-273 (YGGFTMMFDDRRGRPVGFPMRGRGGFDRMPPGRGGRPM). A run of 3 repeats spans residues 245–250 (DRRGRP), 257–260 (GRGG), and 267–270 (GRGG). A 2 X 6 AA repeats of D-R-R-G-R-P region spans residues 245–329 (DRRGRPVGFP…LMAYDRRGRP (85 aa)). The disordered stretch occupies residues 250–329 (PVGFPMRGRG…LMAYDRRGRP (80 aa)). Low complexity predominate over residues 252 to 266 (GFPMRGRGGFDRMPP). A compositionally biased stretch (basic and acidic residues) spans 276–285 (SRRDYDDMSP). S284 bears the Phosphoserine mark. The stretch at 295-298 (GRGG) is one 3-4 repeat. Position 316 is an omega-N-methylarginine (R316). A 2-2 repeat occupies 324–329 (DRRGRP). R377 is subject to Omega-N-methylarginine. S379 carries the post-translational modification Phosphoserine. Y380 carries the phosphotyrosine modification. In terms of domain architecture, KH 3 spans 387–451 (IITTQVTIPK…DQIQNAQYLL (65 aa)). Tandem repeats lie at residues 399–421 (AGSIIGKGGQRIKQIRHESGASI) and 404–407 (GKGG). K405 is subject to N6-acetyllysine; alternate. A Glycyl lysine isopeptide (Lys-Gly) (interchain with G-Cter in SUMO2); alternate cross-link involves residue K405. S420 bears the Phosphoserine mark. K422 is covalently cross-linked (Glycyl lysine isopeptide (Lys-Gly) (interchain with G-Cter in SUMO1); alternate). Residue K422 forms a Glycyl lysine isopeptide (Lys-Gly) (interchain with G-Cter in SUMO2); alternate linkage. A Glycyl lysine isopeptide (Lys-Gly) (interchain with G-Cter in SUMO); alternate cross-link involves residue K422.

In terms of assembly, identified in the spliceosome C complex. Interacts with ANKRD28, RBM42 and ZIK1. Interacts with DDX1. Interacts with MDM2; this interaction leads to ubiquitination and proteasomal degradation. Interacts with p53/TP53. Interacts with BRDT. Interacts with IVNS1ABP. Interacts with PPIA/CYPA. Part of a transcription inhibitory ribonucleoprotein complex composed at least of the circular RNA circZNF827, ZNF827 and HNRNPL. Post-translationally, sumoylated by CBX4. Sumoylation is increased upon DNA damage, such as that produced by doxorubicin, etoposide, UV light and camptothecin, due to enhanced CBX4 phosphorylation by HIPK2 under these conditions. In terms of processing, ubiquitinated by MDM2. Doxorubicin treatment does not affect monoubiquitination, but slightly decreases HNRNPK poly-ubiquitination. O-glycosylated (O-GlcNAcylated), in a cell cycle-dependent manner.

It localises to the cytoplasm. The protein localises to the nucleus. It is found in the nucleoplasm. The protein resides in the cell projection. Its subcellular location is the podosome. In terms of biological role, one of the major pre-mRNA-binding proteins. Binds tenaciously to poly(C) sequences. Likely to play a role in the nuclear metabolism of hnRNAs, particularly for pre-mRNAs that contain cytidine-rich sequences. Can also bind poly(C) single-stranded DNA. Plays an important role in p53/TP53 response to DNA damage, acting at the level of both transcription activation and repression. When sumoylated, acts as a transcriptional coactivator of p53/TP53, playing a role in p21/CDKN1A and 14-3-3 sigma/SFN induction. As far as transcription repression is concerned, acts by interacting with long intergenic RNA p21 (lincRNA-p21), a non-coding RNA induced by p53/TP53. This interaction is necessary for the induction of apoptosis, but not cell cycle arrest. As part of a ribonucleoprotein complex composed at least of ZNF827, HNRNPL and the circular RNA circZNF827 that nucleates the complex on chromatin, may negatively regulate the transcription of genes involved in neuronal differentiation. The polypeptide is Heterogeneous nuclear ribonucleoprotein K (HNRNPK) (Oryctolagus cuniculus (Rabbit)).